Reading from the N-terminus, the 262-residue chain is Lens fiber major intrinsic protein (262 aa).

The Cytoplasmic segment spans residues 1-9; that stretch reads MRELRSSSF. Residues 10–29 form a helical membrane-spanning segment; sequence WRAILAEFLGSLLYTLLGLG. Over 30–41 the chain is Extracellular; that stretch reads ASLRWAPGPHGV. A helical membrane pass occupies residues 42-59; that stretch reads LGSALAFGLAQATLVQAL. Topologically, residues 60–61 are cytoplasmic; it reads GH. Residues 62-77 constitute an intramembrane region (discontinuously helical); it reads VSGGHINPAITLAFLL. The short motif at 68–70 is the NPA 1 element; sequence NPA. The Cytoplasmic segment spans residues 78-82; that stretch reads ASQLS. The helical transmembrane segment at 83–106 threads the bilayer; sequence LPRALGYLLAQLLGALAGAGVLYG. The Extracellular portion of the chain corresponds to 107–127; sequence VTPAAVRGTLGLSALHPSVGP. Residues 128–148 traverse the membrane as a helical segment; the sequence is GQGTVVELLLTAQFILCVFAS. Over 149–156 the chain is Cytoplasmic; that stretch reads FDDRHDGR. A helical membrane pass occupies residues 157 to 175; that stretch reads PGSAALPVGFSLALGHLFG. Residues 176–178 lie on the Extracellular side of the membrane; sequence IPF. The discontinuously helical intramembrane region spans 179–193; that stretch reads TGAGMNPARSFAPAV. Positions 184 to 186 match the NPA 2 motif; that stretch reads NPA. Residues 194-200 are Extracellular-facing; that stretch reads ITRNFTN. A helical membrane pass occupies residues 201 to 222; it reads HWVFWAGPLLGAALAALLYELA. At 223–262 the chain is on the cytoplasmic side; the sequence is LCPRARSMAERLAVLRGEPPAAAPPPEPPAEPLELKTQGL. Positions 227 to 237 are interaction with CALM; sequence ARSMAERLAVL. The disordered stretch occupies residues 240–262; the sequence is EPPAAAPPPEPPAEPLELKTQGL. The span at 243–253 shows a compositional bias: pro residues; the sequence is AAAPPPEPPAE.

The protein belongs to the MIP/aquaporin (TC 1.A.8) family. Homotetramer; each monomer provides an independent water pore. Two homotetramers on opposing membranes can dimerize, forming a cell-cell junction. Interacts with CALM; the calcium-calmodulin/CALM complex interacts with the cytoplasmic domains of two aquaporins, leading to channel closure. During early stages of lens development, interacts through its C-terminal region with Cx56 and GJA8/Cx45.6. Major component of lens fiber gap junctions.

It is found in the cell membrane. Its subcellular location is the cell junction. It catalyses the reaction H2O(in) = H2O(out). With respect to regulation, the water channel activity is inhibited by calcium through calmodulin/CALM. Its function is as follows. Aquaporins form homotetrameric transmembrane channels, with each monomer independently mediating water transport across the plasma membrane along its osmotic gradient. Specifically expressed in lens fiber cells, this aquaporin is crucial for maintaining lens water homeostasis and transparency. Beyond water permeability, it also acts as a cell-to-cell adhesion molecule, forming thin junctions between lens fiber cells that are essential for maintaining the ordered structure and transparency of the lens. The polypeptide is Lens fiber major intrinsic protein (Gallus gallus (Chicken)).